A 278-amino-acid polypeptide reads, in one-letter code: Checkpoint protein Hus1-like (278 aa).

This sequence belongs to the HUS1 family. Component of the 9-1-1 checkpoint clamp complex consisting of Rad9 isoform A, Rad1 and Hus1-like; the interactions with Rad1 and Rad9 are direct. This complex probably also forms with Rad9 isoform B, however 9-1-1 complex containing Rad9 isoform A localizes to the nuclear periphery. Expressed in ovary.

It is found in the cytoplasm. It localises to the nucleus envelope. In terms of biological role, component of the 9-1-1 checkpoint clamp complex. Involved in both meiotic and somatic DNA damage responses. Essential for activation of the meiotic checkpoint in response to double-strand DNA breaks; required for the S-phase checkpoint but not the G2-M phase checkpoint. Involved in double strand break repair by homologous recombination during meiosis; influences the organization of chromosomal DNA in the meiotic nucleus. The protein is Checkpoint protein Hus1-like of Drosophila melanogaster (Fruit fly).